We begin with the raw amino-acid sequence, 180 residues long: FMN reductase (NADH) RutF (180 aa).

Belongs to the non-flavoprotein flavin reductase family. RutF subfamily.

It carries out the reaction FMNH2 + NAD(+) = FMN + NADH + 2 H(+). Its function is as follows. Catalyzes the reduction of FMN to FMNH2 which is used to reduce pyrimidine by RutA via the Rut pathway. The chain is FMN reductase (NADH) RutF from Bradyrhizobium diazoefficiens (strain JCM 10833 / BCRC 13528 / IAM 13628 / NBRC 14792 / USDA 110).